The chain runs to 160 residues: MHILKKPDFSDPKLRAKLAKGMGHNYYGEPAWPNDLLYIFPVVILGTFACLVGLAVLDPAMLGDKADPFATPLEILPEWYLYPVFQILRVVPNKLLGIALQTLVPLGLMLIPFIESVNKYQNPFRRPIAMAFFLFGTVITIYLGIGACLPIDKSLTLGLF.

3 helical membrane-spanning segments follow: residues 36-56 (LLYIFPVVILGTFACLVGLAV), 95-115 (LLGIALQTLVPLGLMLIPFIE), and 128-148 (IAMAFFLFGTVITIYLGIGAC).

It belongs to the cytochrome b family. PetD subfamily. The 4 large subunits of the cytochrome b6-f complex are cytochrome b6, subunit IV (17 kDa polypeptide, PetD), cytochrome f and the Rieske protein, while the 4 small subunits are PetG, PetL, PetM and PetN. The complex functions as a dimer.

The protein localises to the cellular thylakoid membrane. Functionally, component of the cytochrome b6-f complex, which mediates electron transfer between photosystem II (PSII) and photosystem I (PSI), cyclic electron flow around PSI, and state transitions. The chain is Cytochrome b6-f complex subunit 4 from Prochlorococcus marinus (strain MIT 9313).